A 290-amino-acid chain; its full sequence is 7-methylguanosine phosphate-specific 5'-nucleotidase A (290 aa).

Asp-39 functions as the Nucleophile in the catalytic mechanism. Mg(2+) contacts are provided by Asp-39 and Asp-41. Asp-41 (proton donor) is an active-site residue. Glu-86 is a CMP binding site. Glu-86 is a N(7)-methyl-GMP binding site. Residues 154–155 (SA) and Lys-203 each bind substrate. Asp-228 serves as a coordination point for Mg(2+).

It belongs to the pyrimidine 5'-nucleotidase family. Monomer.

Its subcellular location is the cytoplasm. The enzyme catalyses N(7)-methyl-GMP + H2O = N(7)-methylguanosine + phosphate. The catalysed reaction is CMP + H2O = cytidine + phosphate. It catalyses the reaction a ribonucleoside 5'-phosphate + H2O = a ribonucleoside + phosphate. Specifically hydrolyzes 7-methylguanosine monophosphate (m(7)GMP) to 7-methylguanosine and inorganic phosphate. The specific activity for m(7)GMP may protect cells against undesired salvage of m(7)GMP and its incorporation into nucleic acids. Also has weak activity for CMP. UMP and purine nucleotides are poor substrates. The sequence is that of 7-methylguanosine phosphate-specific 5'-nucleotidase A (Nt5c3b-a) from Xenopus laevis (African clawed frog).